The primary structure comprises 353 residues: Photosystem II protein D1 (353 aa).

Position 2 is an N-acetylthreonine (T2). T2 bears the Phosphothreonine mark. The next 3 helical transmembrane spans lie at 29 to 46, 118 to 133, and 142 to 156; these read YIGW…TATS, HFLL…EWEL, and WIAV…AATA. H118 is a chlorophyll a binding site. Y126 contributes to the pheophytin a binding site. Residues D170 and E189 each coordinate [CaMn4O5] cluster. The helical transmembrane segment at 197 to 218 threads the bilayer; sequence FHMLGVAGVFGGSLFSAMHGSL. H198 contributes to the chlorophyll a binding site. Residues H215 and 264 to 265 each bind a quinone; that span reads SF. Residue H215 participates in Fe cation binding. H272 lines the Fe cation pocket. A helical membrane pass occupies residues 274–288; the sequence is FLAAWPVVGIWFTAL. Residues H332, E333, D342, and A344 each coordinate [CaMn4O5] cluster. The propeptide occupies 345–353; sequence AVEAPSING.

Belongs to the reaction center PufL/M/PsbA/D family. As to quaternary structure, PSII is composed of 1 copy each of membrane proteins PsbA, PsbB, PsbC, PsbD, PsbE, PsbF, PsbH, PsbI, PsbJ, PsbK, PsbL, PsbM, PsbT, PsbX, PsbY, PsbZ, Psb30/Ycf12, at least 3 peripheral proteins of the oxygen-evolving complex and a large number of cofactors. It forms dimeric complexes. The D1/D2 heterodimer binds P680, chlorophylls that are the primary electron donor of PSII, and subsequent electron acceptors. It shares a non-heme iron and each subunit binds pheophytin, quinone, additional chlorophylls, carotenoids and lipids. D1 provides most of the ligands for the Mn4-Ca-O5 cluster of the oxygen-evolving complex (OEC). There is also a Cl(-1) ion associated with D1 and D2, which is required for oxygen evolution. The PSII complex binds additional chlorophylls, carotenoids and specific lipids. is required as a cofactor. Post-translationally, tyr-161 forms a radical intermediate that is referred to as redox-active TyrZ, YZ or Y-Z. In terms of processing, C-terminally processed by CTPA; processing is essential to allow assembly of the oxygen-evolving complex and thus photosynthetic growth.

The protein localises to the plastid. The protein resides in the chloroplast thylakoid membrane. The enzyme catalyses 2 a plastoquinone + 4 hnu + 2 H2O = 2 a plastoquinol + O2. In terms of biological role, photosystem II (PSII) is a light-driven water:plastoquinone oxidoreductase that uses light energy to abstract electrons from H(2)O, generating O(2) and a proton gradient subsequently used for ATP formation. It consists of a core antenna complex that captures photons, and an electron transfer chain that converts photonic excitation into a charge separation. The D1/D2 (PsbA/PsbD) reaction center heterodimer binds P680, the primary electron donor of PSII as well as several subsequent electron acceptors. The sequence is that of Photosystem II protein D1 from Illicium oligandrum (Star anise).